The primary structure comprises 241 residues: Chloride intracellular channel protein 1 (241 aa).

N-acetylalanine is present on alanine 2. A required for insertion into the membrane region spans residues 2–90 (AEEQPQVELF…EEFLEAVLCP (89 aa)). Lysine 13 is modified (N6-acetyllysine). Residues 24-27 (CPFS) carry the G-site motif. Cysteine 24 and cysteine 59 are disulfide-bonded. A helical membrane pass occupies residues 26-46 (FSQRLFMVLWLKGVTFNVTTV). The region spanning 93–233 (YPKLAALNPE…PDDEEIELAY (141 aa)) is the GST C-terminal domain. Lysine 119 bears the N6-acetyllysine mark. The residue at position 121 (serine 121) is a Phosphoserine. Lysine 131 bears the N6-acetyllysine mark. A phosphoserine mark is found at serine 156 and serine 211. Tyrosine 233 carries the post-translational modification Phosphotyrosine.

It belongs to the chloride channel CLIC family. As to quaternary structure, monomer. Homodimer (in vitro). Interacts with TRAPPC2. Dimerization requires a conformation change that leads to the exposure of a large hydrophobic surface. In vivo, this may lead to membrane insertion.

It localises to the nucleus. It is found in the nucleus membrane. Its subcellular location is the cytoplasm. The protein resides in the cell membrane. The protein localises to the endoplasmic reticulum. It catalyses the reaction L-dehydroascorbate + 2 glutathione = glutathione disulfide + L-ascorbate. It carries out the reaction chloride(in) = chloride(out). The enzyme catalyses iodide(out) = iodide(in). The catalysed reaction is thiocyanate(in) = thiocyanate(out). It catalyses the reaction nitrate(in) = nitrate(out). It carries out the reaction bromide(in) = bromide(out). The enzyme catalyses fluoride(in) = fluoride(out). In the soluble state, catalyzes glutaredoxin-like thiol disulfide exchange reactions with reduced glutathione as electron donor. Reduces selenite and dehydroascorbate and may act as an antioxidant during oxidative stress response. Can insert into membranes and form voltage-dependent multi-ion conductive channels. Membrane insertion seems to be redox-regulated and may occur only under oxidizing conditions. Involved in regulation of the cell cycle. In Oryctolagus cuniculus (Rabbit), this protein is Chloride intracellular channel protein 1 (CLIC1).